Consider the following 469-residue polypeptide: Neuraminidase (469 aa).

Residues 1–9 lie on the Intravirion side of the membrane; the sequence is MNPNQKIIT. The helical transmembrane segment at 10 to 30 threads the bilayer; it reads IGSVSLTIATICFLMQIAILV. The involved in apical transport and lipid raft association stretch occupies residues 11 to 33; it reads GSVSLTIATICFLMQIAILVTTV. Over 31 to 469 the chain is Virion surface; it reads TTVTLHFKQY…DGADINLMPI (439 aa). The tract at residues 36-88 is hypervariable stalk region; the sequence is HFKQYECDSPANKQVMPCEPIIIERNITEIVYLTNTTIEKEICPKLVEYRNWS. 3 N-linked (GlcNAc...) asparagine; by host glycosylation sites follow: Asn-61, Asn-70, and Asn-86. The head of neuraminidase stretch occupies residues 91–469; that stretch reads QCKITGFAPF…DGADINLMPI (379 aa). Intrachain disulfides connect Cys-92-Cys-417, Cys-124-Cys-129, Cys-183-Cys-230, Cys-232-Cys-237, Cys-278-Cys-291, Cys-280-Cys-289, Cys-318-Cys-337, and Cys-421-Cys-447. Arg-118 lines the substrate pocket. A glycan (N-linked (GlcNAc...) asparagine; by host) is linked at Asn-146. Residue Asp-151 is the Proton donor/acceptor of the active site. Arg-152 provides a ligand contact to substrate. Residues Asn-200 and Asn-234 are each glycosylated (N-linked (GlcNAc...) asparagine; by host). 276–277 is a binding site for substrate; it reads EE. A substrate-binding site is contributed by Arg-292. The Ca(2+) site is built by Asp-293, Gly-297, and Asp-324. Arg-371 serves as a coordination point for substrate. N-linked (GlcNAc...) asparagine; by host glycosylation is present at Asn-402. The active-site Nucleophile is the Tyr-406.

Belongs to the glycosyl hydrolase 34 family. As to quaternary structure, homotetramer. The cofactor is Ca(2+). In terms of processing, N-glycosylated.

The protein localises to the virion membrane. Its subcellular location is the host apical cell membrane. The catalysed reaction is Hydrolysis of alpha-(2-&gt;3)-, alpha-(2-&gt;6)-, alpha-(2-&gt;8)- glycosidic linkages of terminal sialic acid residues in oligosaccharides, glycoproteins, glycolipids, colominic acid and synthetic substrates.. Inhibited by the neuraminidase inhibitors zanamivir (Relenza) and oseltamivir (Tamiflu). These drugs interfere with the release of progeny virus from infected cells and are effective against all influenza strains. Resistance to neuraminidase inhibitors is quite rare. In terms of biological role, catalyzes the removal of terminal sialic acid residues from viral and cellular glycoconjugates. Cleaves off the terminal sialic acids on the glycosylated HA during virus budding to facilitate virus release. Additionally helps virus spread through the circulation by further removing sialic acids from the cell surface. These cleavages prevent self-aggregation and ensure the efficient spread of the progeny virus from cell to cell. Otherwise, infection would be limited to one round of replication. Described as a receptor-destroying enzyme because it cleaves a terminal sialic acid from the cellular receptors. May facilitate viral invasion of the upper airways by cleaving the sialic acid moieties on the mucin of the airway epithelial cells. Likely to plays a role in the budding process through its association with lipid rafts during intracellular transport. May additionally display a raft-association independent effect on budding. Plays a role in the determination of host range restriction on replication and virulence. Sialidase activity in late endosome/lysosome traffic seems to enhance virus replication. This Influenza A virus (strain A/Beijing/39/1975 H3N2) protein is Neuraminidase.